The primary structure comprises 404 residues: LL-diaminopimelate aminotransferase (404 aa).

Positions 15 and 42 each coordinate substrate. Residues Y72, 108–109, Y132, N188, Y219, and 247–249 each bind pyridoxal 5'-phosphate; these read AK and SFS. Positions 109, 132, and 188 each coordinate substrate. K250 bears the N6-(pyridoxal phosphate)lysine mark. Pyridoxal 5'-phosphate-binding residues include R258 and N288. N288 and R384 together coordinate substrate.

This sequence belongs to the class-I pyridoxal-phosphate-dependent aminotransferase family. LL-diaminopimelate aminotransferase subfamily. Homodimer. Pyridoxal 5'-phosphate serves as cofactor.

The catalysed reaction is (2S,6S)-2,6-diaminopimelate + 2-oxoglutarate = (S)-2,3,4,5-tetrahydrodipicolinate + L-glutamate + H2O + H(+). The protein operates within amino-acid biosynthesis; L-lysine biosynthesis via DAP pathway; LL-2,6-diaminopimelate from (S)-tetrahydrodipicolinate (aminotransferase route): step 1/1. Functionally, involved in the synthesis of meso-diaminopimelate (m-DAP or DL-DAP), required for both lysine and peptidoglycan biosynthesis. Catalyzes the direct conversion of tetrahydrodipicolinate to LL-diaminopimelate. The protein is LL-diaminopimelate aminotransferase of Lachnoclostridium phytofermentans (strain ATCC 700394 / DSM 18823 / ISDg) (Clostridium phytofermentans).